The sequence spans 125 residues: Prepro-urotensin II-alpha (125 aa).

Positions 1 to 21 are cleaved as a signal peptide; that stretch reads MMCNLLLSFSVLLLSCTHLVA. A propeptide spanning residues 109–111 is cleaved from the precursor; that stretch reads QFR. A disulfide bridge connects residues Cys119 and Cys124.

It belongs to the urotensin-2 family.

The protein resides in the secreted. Functionally, urotensin is found in the teleost caudal neurosecretory system. It has a suggested role in osmoregulation and as a corticotropin-releasing factor. The non-hormonal portion of this precursor may be a urotensin binding protein, urophysin. The chain is Prepro-urotensin II-alpha from Cyprinus carpio (Common carp).